The sequence spans 270 residues: Acyl-[acyl-carrier-protein]--UDP-N-acetylglucosamine O-acyltransferase (270 aa).

It belongs to the transferase hexapeptide repeat family. LpxA subfamily. Homotrimer.

It localises to the cytoplasm. It catalyses the reaction a (3R)-hydroxyacyl-[ACP] + UDP-N-acetyl-alpha-D-glucosamine = a UDP-3-O-[(3R)-3-hydroxyacyl]-N-acetyl-alpha-D-glucosamine + holo-[ACP]. The protein operates within glycolipid biosynthesis; lipid IV(A) biosynthesis; lipid IV(A) from (3R)-3-hydroxytetradecanoyl-[acyl-carrier-protein] and UDP-N-acetyl-alpha-D-glucosamine: step 1/6. In terms of biological role, involved in the biosynthesis of lipid A, a phosphorylated glycolipid that anchors the lipopolysaccharide to the outer membrane of the cell. The sequence is that of Acyl-[acyl-carrier-protein]--UDP-N-acetylglucosamine O-acyltransferase from Helicobacter pylori (strain HPAG1).